A 68-amino-acid polypeptide reads, in one-letter code: Large ribosomal subunit protein bL35 (68 aa).

2 stretches are compositionally biased toward basic residues: residues 1 to 15 (MPKMKSHSGTKKRFK) and 23 to 38 (TARKAGKRHLNEHKSS). Residues 1-38 (MPKMKSHSGTKKRFKVTGSGKVTARKAGKRHLNEHKSS) form a disordered region.

This sequence belongs to the bacterial ribosomal protein bL35 family.

The protein is Large ribosomal subunit protein bL35 of Cutibacterium acnes (strain DSM 16379 / KPA171202) (Propionibacterium acnes).